A 382-amino-acid chain; its full sequence is Dual-specificity RNA methyltransferase RlmN (382 aa).

Glu-96 (proton acceptor) is an active-site residue. The Radical SAM core domain occupies Gln-102–Asp-342. A disulfide bridge connects residues Cys-109 and Cys-345. [4Fe-4S] cluster-binding residues include Cys-116, Cys-120, and Cys-123. Residues Gly-170–Glu-171, Ser-202, Ser-224–His-226, and Asn-302 contribute to the S-adenosyl-L-methionine site. The active-site S-methylcysteine intermediate is Cys-345.

The protein belongs to the radical SAM superfamily. RlmN family. [4Fe-4S] cluster serves as cofactor.

It localises to the cytoplasm. The catalysed reaction is adenosine(2503) in 23S rRNA + 2 reduced [2Fe-2S]-[ferredoxin] + 2 S-adenosyl-L-methionine = 2-methyladenosine(2503) in 23S rRNA + 5'-deoxyadenosine + L-methionine + 2 oxidized [2Fe-2S]-[ferredoxin] + S-adenosyl-L-homocysteine. It catalyses the reaction adenosine(37) in tRNA + 2 reduced [2Fe-2S]-[ferredoxin] + 2 S-adenosyl-L-methionine = 2-methyladenosine(37) in tRNA + 5'-deoxyadenosine + L-methionine + 2 oxidized [2Fe-2S]-[ferredoxin] + S-adenosyl-L-homocysteine. Specifically methylates position 2 of adenine 2503 in 23S rRNA and position 2 of adenine 37 in tRNAs. m2A2503 modification seems to play a crucial role in the proofreading step occurring at the peptidyl transferase center and thus would serve to optimize ribosomal fidelity. This chain is Dual-specificity RNA methyltransferase RlmN, found in Pseudomonas fluorescens (strain ATCC BAA-477 / NRRL B-23932 / Pf-5).